We begin with the raw amino-acid sequence, 235 residues long: Endonuclease V (235 aa).

Mg(2+)-binding residues include D47 and D117.

This sequence belongs to the endonuclease V family. Mg(2+) serves as cofactor.

The protein resides in the cytoplasm. It carries out the reaction Endonucleolytic cleavage at apurinic or apyrimidinic sites to products with a 5'-phosphate.. In terms of biological role, DNA repair enzyme involved in the repair of deaminated bases. Selectively cleaves double-stranded DNA at the second phosphodiester bond 3' to a deoxyinosine leaving behind the intact lesion on the nicked DNA. In Protochlamydia amoebophila (strain UWE25), this protein is Endonuclease V.